A 246-amino-acid chain; its full sequence is MRRRPPQLTKTKLADEEVPELTLVPDGVSRWTGSDLDALLNAARRGGAEAAQQDLERKLCRTIDILGARSQQAQEINAVLTSVARLRENSTFRLYLLTQNHRGVGILKVGVKKLFVTHPVTCGLVEVDPLCVLDFYVDESCQRQGYGKMLYSHMLKAEHVSRPEVLAIDRPSNKLLGFLRKHYGLAAYTPQVNNFVVFHSFFDHTTVSERGKLLRAPSPARASPFPSSANATVAIGGAKAKNWTPG.

The region spanning 21–202 (LTLVPDGVSR…NNFVVFHSFF (182 aa)) is the N-acetyltransferase domain. Residues 135–148 (FYVD…GYGK) and 172–181 (SNKLLGFLRK) contribute to the acetyl-CoA site.

Belongs to the acetyltransferase ATAT1 family.

It catalyses the reaction L-lysyl-[alpha-tubulin] + acetyl-CoA = N(6)-acetyl-L-lysyl-[alpha-tubulin] + CoA + H(+). Its function is as follows. Specifically acetylates 'Lys-40' in alpha-tubulin on the lumenal side of microtubules. Promotes microtubule destabilization and accelerates microtubule dynamics; this activity may be independent of acetylation activity. Acetylates alpha-tubulin with a slow enzymatic rate, due to a catalytic site that is not optimized for acetyl transfer. Enters the microtubule through each end and diffuses quickly throughout the lumen of microtubules. Acetylates only long/old microtubules because of its slow acetylation rate since it does not have time to act on dynamically unstable microtubules before the enzyme is released. The polypeptide is Alpha-tubulin N-acetyltransferase (Leishmania major).